Consider the following 415-residue polypeptide: Serine hydroxymethyltransferase (415 aa).

Residues Leu-122 and 126-128 contribute to the (6S)-5,6,7,8-tetrahydrofolate site; that span reads GHL. The residue at position 230 (Lys-230) is an N6-(pyridoxal phosphate)lysine.

The protein belongs to the SHMT family. Homodimer. Requires pyridoxal 5'-phosphate as cofactor.

Its subcellular location is the cytoplasm. It carries out the reaction (6R)-5,10-methylene-5,6,7,8-tetrahydrofolate + glycine + H2O = (6S)-5,6,7,8-tetrahydrofolate + L-serine. Its pathway is one-carbon metabolism; tetrahydrofolate interconversion. The protein operates within amino-acid biosynthesis; glycine biosynthesis; glycine from L-serine: step 1/1. In terms of biological role, catalyzes the reversible interconversion of serine and glycine with tetrahydrofolate (THF) serving as the one-carbon carrier. This reaction serves as the major source of one-carbon groups required for the biosynthesis of purines, thymidylate, methionine, and other important biomolecules. Also exhibits THF-independent aldolase activity toward beta-hydroxyamino acids, producing glycine and aldehydes, via a retro-aldol mechanism. In Cupriavidus taiwanensis (strain DSM 17343 / BCRC 17206 / CCUG 44338 / CIP 107171 / LMG 19424 / R1) (Ralstonia taiwanensis (strain LMG 19424)), this protein is Serine hydroxymethyltransferase.